Consider the following 487-residue polypeptide: MGKQQDWSVTACIFLSLSLASQIHCSSQTHFPSHKGGAGLSGDTSHFNSVSRENVLSLKEKDLIEKLPGQPSGISFRQYGGYVAVNEPATRFLYYYFVEAIKPSKSTPLVLWFNGGPGCSSVGFGAFEELGPFRVHSDGKTLYRNPYSWNNEANMLFFEGPISVGFSYSSTPFDWEIFGEQADKLTAEDNYMFLVNWLERFPEYKGRDVYISGQSYAGHYIPQLAQIILHRNNQTFINLRGISIGNPGLDLLIEADNENKFILSHGLVSQKDFEEYSKVCDFANYDMDECPKIMPKFSIEHNKHLDVYNIYAPVCLNSTLSSEPKKCTTIMEVDPCRSNYVKAYLNSENVQEAMHANTTKLPYEWKACNHYLNSVWIDADKDASMVPILHDLMGEGVRVLVYSGDVDAAIPFTATMAVLKTMNLTVVNEWRPWFTGGQLGGFTEDYERNLTYATVKGSGHSVPLDQPVHALNLFTSFIRNTPLPQTP.

The first 20 residues, 1–20, serve as a signal peptide directing secretion; the sequence is MGKQQDWSVTACIFLSLSLA. Intrachain disulfides connect Cys-119–Cys-368, Cys-280–Cys-290, and Cys-315–Cys-336. Residue Ser-215 is part of the active site. Asn-233 is a glycosylation site (N-linked (GlcNAc...) asparagine). 2 N-linked (GlcNAc...) asparagine glycosylation sites follow: Asn-317 and Asn-357. Asp-407 is an active-site residue. Residues Asn-423 and Asn-449 are each glycosylated (N-linked (GlcNAc...) asparagine). His-460 is a catalytic residue.

This sequence belongs to the peptidase S10 family. As to expression, expressed in seedlings, roots, leaves, flowers and siliques.

The protein localises to the secreted. Its function is as follows. Probable carboxypeptidase. In Arabidopsis thaliana (Mouse-ear cress), this protein is Serine carboxypeptidase-like 38 (SCPL38).